Here is a 747-residue protein sequence, read N- to C-terminus: Protein Niban 2 (747 aa).

G2 carries the N-myristoyl glycine lipid modification. A PH domain is found at 68–192; sequence RIIFSGNLFQ…WQAVLQDCVR (125 aa). Phosphoserine is present on residues S568 and S574. The interval 589–747 is disordered; sequence WGEQYGDGGD…EDSAGVQTEF (159 aa). A compositionally biased stretch (gly residues) spans 593–602; that stretch reads YGDGGDGSDS. Residues S605, S626, S641, S645, S648, S667, S672, S683, S693, and S697 each carry the phosphoserine modification. Over residues 708-722 the composition is skewed to basic and acidic residues; it reads VDLEPPKPSDQETGE. The segment covering 734-747 has biased composition (polar residues); it reads HTTTEDSAGVQTEF.

Belongs to the Niban family. As apoptosis proceeds, degraded via an proteasome-independent pathway, probably by caspases.

Its subcellular location is the cytoplasm. The protein localises to the cytosol. It is found in the cell junction. The protein resides in the adherens junction. It localises to the membrane. Its function is as follows. May play a role in apoptosis suppression. This is Protein Niban 2 from Rattus norvegicus (Rat).